The chain runs to 237 residues: uncharacterized protein (237 aa).

Residues 213 to 237 (GQGKYLKLDSNTTENKTTKQNETGG) are disordered. A compositionally biased stretch (low complexity) spans 223–237 (NTTENKTTKQNETGG).

This is an uncharacterized protein from Methanothermobacter thermautotrophicus (Methanobacterium thermoformicicum).